Here is a 657-residue protein sequence, read N- to C-terminus: MDTRDLTAYSAEKFKELDRIIAEAKRQSILDVLKGICDEHLAHSKNSIIALYISGIISLSKQLLDDSCLVTLLTIFGDNHKNQIVEHLCTRVLEYGESKLALRALGECYKTSGNEQLYDVWERLVRIDYEEAEITRVLADKYEQEGNKEKATEFYKKALYRFIARRQNAAIKEVWTKLVALIPDDVEFFYREQKKISEKLGEGRGSVLMQDVYVYYKENEDWTTCINILKHILEHDEKDVWARKEIIENFRCKYRGHSQLEEYLKISNISQSWRNVFEAINDFEKHISFDEGSFVFHRTWGVGRIAKVCNDELLIDFAKRRAHTMLLKMAISALQTLGKEHIWVLKSVLKRQDLAAKIRQDPEWALKVIITSFDNNCNLKKVKQELVPSLLSVGEWTSWSTKARKILKESTGFAANPSNIDFYTVRSCPVSLEEKLAVEFKAQKNFFARIDILNTFMDKADTDSDAFREMFDYFNTFLRAFSVVDGNVIAAYLVVTRVSTVLPHLNACRPHGFADLYAHIADPRLVYTEIKDKGLKWEFVNSVKNFVSNWSDEYVKLFPEVLSLEILRALMEEGYKEKALRVVEACFEYYADNRAAVIWLFKTVRMSLGSRSCALPQNSGLSSSSTLWTLLIGKSLTGGTPLRTENLTAGSFGTLWE.

The 152-residue stretch at 1-152 (MDTRDLTAYS…EQEGNKEKAT (152 aa)) folds into the GRAD2 domain. A GRAD1 domain is found at 153–657 (EFYKKALYRF…TAGSFGTLWE (505 aa)).

This chain is Putative GreA-associated domains protein, found in Treponema pallidum (strain Nichols).